Reading from the N-terminus, the 404-residue chain is tRNA/tmRNA (uracil-C(5))-methyltransferase (404 aa).

Positions 218, 251, 256, 272, and 332 each coordinate S-adenosyl-L-methionine. The Nucleophile role is filled by C358. E392 acts as the Proton acceptor in catalysis.

This sequence belongs to the class I-like SAM-binding methyltransferase superfamily. RNA M5U methyltransferase family. TrmA subfamily.

The catalysed reaction is uridine(54) in tRNA + S-adenosyl-L-methionine = 5-methyluridine(54) in tRNA + S-adenosyl-L-homocysteine + H(+). It catalyses the reaction uridine(341) in tmRNA + S-adenosyl-L-methionine = 5-methyluridine(341) in tmRNA + S-adenosyl-L-homocysteine + H(+). Its function is as follows. Dual-specificity methyltransferase that catalyzes the formation of 5-methyluridine at position 54 (m5U54) in all tRNAs, and that of position 341 (m5U341) in tmRNA (transfer-mRNA). The protein is tRNA/tmRNA (uracil-C(5))-methyltransferase of Helicobacter hepaticus (strain ATCC 51449 / 3B1).